A 284-amino-acid chain; its full sequence is Tropomyosin (284 aa).

Residues 1 to 273 (MDAIKKKMVA…KEKYKAISDE (273 aa)) adopt a coiled-coil conformation. Over residues 110-130 (SGKLEEASKAADESERNRKVL) the composition is skewed to basic and acidic residues. Residues 110–134 (SGKLEEASKAADESERNRKVLENLN) are disordered.

It belongs to the tropomyosin family. As to quaternary structure, homodimer.

Functionally, tropomyosin, in association with the troponin complex, plays a central role in the calcium dependent regulation of muscle contraction. The chain is Tropomyosin from Perna viridis (Asian green mussel).